The primary structure comprises 207 residues: Dephospho-CoA kinase (207 aa).

Residues 10 to 207 (ILGLTGGIGS…FYLTLRGGQS (198 aa)) enclose the DPCK domain. Residue 18–23 (GSGKSA) coordinates ATP.

It belongs to the CoaE family.

It is found in the cytoplasm. The enzyme catalyses 3'-dephospho-CoA + ATP = ADP + CoA + H(+). Its pathway is cofactor biosynthesis; coenzyme A biosynthesis; CoA from (R)-pantothenate: step 5/5. In terms of biological role, catalyzes the phosphorylation of the 3'-hydroxyl group of dephosphocoenzyme A to form coenzyme A. The protein is Dephospho-CoA kinase of Pseudomonas savastanoi pv. phaseolicola (strain 1448A / Race 6) (Pseudomonas syringae pv. phaseolicola (strain 1448A / Race 6)).